The following is a 425-amino-acid chain: MGKDYQVLGKNKVKVDSLEKVMGTAKFAADYSFPDMLYAGVFRSTVPHARIVSLDLSKARAIDGVEAVLDYHAIPGKNRFGIIIKDEPCLVDDKVRRYGDAIAVVAAQTPDLVQEALDAITIEYEELEGIFTMERALEEDSPAIHGDTNIHQVKHLEYGDVDAAFKQCDIVVEDTYSTHRLTHMFIEPDAGVSYYDNEGMLTVVVSTQNPHYDRGEVAGMLALPNSKVRIIQATTGGGFGGKLDLSVQCHCALLTYHTKKPVKMVRSREESTTVSSKRHPMTMHCKTGATKDGRLQAVQVEMFGDTGAYASYGPAVITRATVHCMGPYVVPNVRVDAKFVYTNNPMSGAFRGFGVPQASVCHEGQMNALAKALGMDPIDIRILNAHQVGAKLATGQVLENSVGLIETLEKAREKAVEVMGYEKTR.

Se-Mo-molybdopterin cytosine dinucleotide contacts are provided by residues glutamine 208 and 238–240 (GFG).

Belongs to the xanthine dehydrogenase family. In terms of assembly, heterooctamer of NDHM, NDHL, NDHS and NDHF. Dimer of heterotetramers. Requires Se-Mo-molybdopterin cytosine dinucleotide as cofactor.

The enzyme catalyses nicotinate + NADP(+) + H2O = 6-hydroxynicotinate + NADPH + H(+). It functions in the pathway cofactor degradation; nicotinate degradation; 6-hydroxynicotinate from nicotinate: step 1/1. Its activity is regulated as follows. Reversibly inactivated by selenide and sulfide. Not inhibited by cyanide. In terms of biological role, catalyzes the hydroxylation of nicotinate to 6-hydroxynicotinate. Also active against 2-pyrazinecarboxylic acid, but inactive against other nicotinate analogs. The sequence is that of Nicotinate dehydrogenase large molybdopterin subunit (ndhL) from Eubacterium barkeri (Clostridium barkeri).